Reading from the N-terminus, the 497-residue chain is Glutamate--tRNA ligase (497 aa).

The 'HIGH' region signature appears at 13 to 23 (PSPTGDPHVGT). The 'KMSKS' region motif lies at 253–257 (KISKR). Lysine 256 is an ATP binding site.

It belongs to the class-I aminoacyl-tRNA synthetase family. Glutamate--tRNA ligase type 1 subfamily. Monomer.

The protein localises to the cytoplasm. It catalyses the reaction tRNA(Glu) + L-glutamate + ATP = L-glutamyl-tRNA(Glu) + AMP + diphosphate. In terms of biological role, catalyzes the attachment of glutamate to tRNA(Glu) in a two-step reaction: glutamate is first activated by ATP to form Glu-AMP and then transferred to the acceptor end of tRNA(Glu). The sequence is that of Glutamate--tRNA ligase from Cutibacterium acnes (strain DSM 16379 / KPA171202) (Propionibacterium acnes).